The primary structure comprises 179 residues: ATP-dependent protease subunit HslV (179 aa).

Thr6 is a catalytic residue. Na(+) contacts are provided by Ser162, Cys165, and Thr168.

It belongs to the peptidase T1B family. HslV subfamily. A double ring-shaped homohexamer of HslV is capped on each side by a ring-shaped HslU homohexamer. The assembly of the HslU/HslV complex is dependent on binding of ATP.

It is found in the cytoplasm. It catalyses the reaction ATP-dependent cleavage of peptide bonds with broad specificity.. Its activity is regulated as follows. Allosterically activated by HslU binding. Its function is as follows. Protease subunit of a proteasome-like degradation complex believed to be a general protein degrading machinery. The sequence is that of ATP-dependent protease subunit HslV from Maridesulfovibrio salexigens (strain ATCC 14822 / DSM 2638 / NCIMB 8403 / VKM B-1763) (Desulfovibrio salexigens).